Consider the following 177-residue polypeptide: Large ribosomal subunit protein uL6 (177 aa).

Belongs to the universal ribosomal protein uL6 family. Part of the 50S ribosomal subunit.

In terms of biological role, this protein binds to the 23S rRNA, and is important in its secondary structure. It is located near the subunit interface in the base of the L7/L12 stalk, and near the tRNA binding site of the peptidyltransferase center. This Cupriavidus metallidurans (strain ATCC 43123 / DSM 2839 / NBRC 102507 / CH34) (Ralstonia metallidurans) protein is Large ribosomal subunit protein uL6.